The primary structure comprises 505 residues: ATP-dependent RNA helicase HAS1 (505 aa).

The disordered stretch occupies residues 1–37; sequence MATPSNKRSRDSESTEEPVVDEKSTSKQNNAAPEGEQ. Residue Ser12 is modified to Phosphoserine. The span at 26–37 shows a compositional bias: polar residues; sequence SKQNNAAPEGEQ. Positions 42–70 match the Q motif motif; the sequence is EKFEELKLSQPTLKAIEKMGFTTMTSVQA. Residues 73-249 enclose the Helicase ATP-binding domain; the sequence is IPPLLAGRDV…RISLRPGPLF (177 aa). 86–93 contributes to the ATP binding site; it reads AKTGSGKT. Residues 196–199 carry the DEAD box motif; the sequence is DEAD. The Helicase C-terminal domain occupies 263–433; the sequence is GLEQGYVVCD…NVQSQLEKLI (171 aa). A Bipartite nuclear localization signal motif is present at residues 275–291; it reads KRFLLLFSFLKRNQKKK.

The protein belongs to the DEAD box helicase family. DDX18/HAS1 subfamily. As to quaternary structure, interacts with RRP1. Associates in the nucleolus with the 60S and pre-60S ribosomal subunits. It has also been isolated with the nuclear pore complex. In terms of processing, phosphorylated by CDK1.

Its subcellular location is the nucleus. The protein localises to the nucleolus. It carries out the reaction ATP + H2O = ADP + phosphate + H(+). Functionally, ATP-dependent RNA helicase involved in 40S ribosomal subunit biogenesis. Required for the processing and cleavage of 35S pre-rRNA at sites A0, A1, and A2, leading to mature 18S rRNA. This chain is ATP-dependent RNA helicase HAS1 (HAS1), found in Saccharomyces cerevisiae (strain ATCC 204508 / S288c) (Baker's yeast).